Here is a 663-residue protein sequence, read N- to C-terminus: DNA ligase (663 aa).

NAD(+) is bound by residues 31 to 35 (DSEYD), 80 to 81 (SL), and Glu-109. Lys-111 acts as the N6-AMP-lysine intermediate in catalysis. NAD(+) contacts are provided by Arg-132, Glu-166, Lys-282, and Lys-306. Zn(2+)-binding residues include Cys-400, Cys-403, Cys-418, and Cys-423. The BRCT domain occupies 585-663 (ELHPVFGEKT…EQMMVDALRN (79 aa)).

Belongs to the NAD-dependent DNA ligase family. LigA subfamily. Requires Mg(2+) as cofactor. Mn(2+) serves as cofactor.

The enzyme catalyses NAD(+) + (deoxyribonucleotide)n-3'-hydroxyl + 5'-phospho-(deoxyribonucleotide)m = (deoxyribonucleotide)n+m + AMP + beta-nicotinamide D-nucleotide.. DNA ligase that catalyzes the formation of phosphodiester linkages between 5'-phosphoryl and 3'-hydroxyl groups in double-stranded DNA using NAD as a coenzyme and as the energy source for the reaction. It is essential for DNA replication and repair of damaged DNA. The polypeptide is DNA ligase (Macrococcus caseolyticus (strain JCSC5402) (Macrococcoides caseolyticum)).